The sequence spans 714 residues: ATP-dependent DNA helicase DinG (714 aa).

Residues Ala-17–Thr-294 form the Helicase ATP-binding domain. Ala-54–Thr-61 provides a ligand contact to ATP. Residues Cys-120, Cys-194, Cys-199, and Cys-205 each coordinate [4Fe-4S] cluster. A DEAH box motif is present at residues Asp-248 to His-251. A Helicase C-terminal domain is found at His-517 to Pro-698.

Belongs to the helicase family. DinG subfamily. Type 1 sub-subfamily. It depends on [4Fe-4S] cluster as a cofactor.

It carries out the reaction Couples ATP hydrolysis with the unwinding of duplex DNA at the replication fork by translocating in the 5'-3' direction. This creates two antiparallel DNA single strands (ssDNA). The leading ssDNA polymer is the template for DNA polymerase III holoenzyme which synthesizes a continuous strand.. The catalysed reaction is ATP + H2O = ADP + phosphate + H(+). Its function is as follows. DNA-dependent ATPase and 5'-3' DNA helicase. Unwinds D-loops, R-loops, forked DNA and G-quadruplex DNA. The sequence is that of ATP-dependent DNA helicase DinG from Salmonella typhimurium (strain LT2 / SGSC1412 / ATCC 700720).